Consider the following 282-residue polypeptide: Stress response regulator protein 1 (282 aa).

Low complexity-rich tracts occupy residues 12 to 30 (NLSR…HSST) and 41 to 58 (SLDT…SNNN). Disordered regions lie at residues 12 to 31 (NLSR…SSTV), 41 to 84 (SLDT…DDED), and 112 to 139 (LTPF…TTVV). Positions 66–77 (SDYNSYTHNQYY) are enriched in polar residues. The segment covering 125 to 139 (SIISSKSSNKSTTVV) has biased composition (low complexity). The Response regulatory domain occupies 155-273 (SFLIVDDNII…LDFMANSIDD (119 aa)). Asp-206 carries the post-translational modification 4-aspartylphosphate.

Required for stress adaptation, morphogenesis and virulence. The chain is Stress response regulator protein 1 (SRR1) from Candida albicans (strain WO-1) (Yeast).